Reading from the N-terminus, the 435-residue chain is Trigger factor (435 aa).

The PPIase FKBP-type domain maps to 164 to 249 (GDFAKFDFEG…LHEIQGKKAG (86 aa)).

This sequence belongs to the FKBP-type PPIase family. Tig subfamily.

Its subcellular location is the cytoplasm. It carries out the reaction [protein]-peptidylproline (omega=180) = [protein]-peptidylproline (omega=0). Involved in protein export. Acts as a chaperone by maintaining the newly synthesized protein in an open conformation. Functions as a peptidyl-prolyl cis-trans isomerase. The protein is Trigger factor of Campylobacter fetus subsp. fetus (strain 82-40).